Reading from the N-terminus, the 287-residue chain is MGRCTIADVAMLIRWRVSLMVAGATFFGAMLAVPHVTITHLLASLATFLLAGGCSAINQVQEADLDAVIPRTASRPIPCGRIGHMYGSLMGLALVTVGWMVLCLAGGLTSLLVGIGIVAVYNGLYTPLKRRTSFALLVGAAAGAMPPVVGWLAVGGHPASPMLVVVYTLYLLWQIPHFWLHAARDREAYRKARLPLPLLSLPHERYARLLKVWFHAYAVAVLMVPAFPLLEWVGMRIMVTLCGIALLFAAMLAVRKRRVALHIADAVLCAVMVVLLIDRLAIPVSLF.

Transmembrane regions (helical) follow at residues 19–39 (LMVA…VTIT), 100–120 (MVLC…IVAV), 134–154 (FALL…WLAV), 162–182 (MLVV…WLHA), 212–232 (VWFH…LLEW), 233–253 (VGMR…AMLA), and 267–287 (VLCA…VSLF).

This sequence belongs to the UbiA prenyltransferase family. Protoheme IX farnesyltransferase subfamily.

It localises to the cell inner membrane. The enzyme catalyses heme b + (2E,6E)-farnesyl diphosphate + H2O = Fe(II)-heme o + diphosphate. It participates in porphyrin-containing compound metabolism; heme O biosynthesis; heme O from protoheme: step 1/1. Functionally, converts heme B (protoheme IX) to heme O by substitution of the vinyl group on carbon 2 of heme B porphyrin ring with a hydroxyethyl farnesyl side group. The polypeptide is Protoheme IX farnesyltransferase (Nitratidesulfovibrio vulgaris (strain ATCC 29579 / DSM 644 / CCUG 34227 / NCIMB 8303 / VKM B-1760 / Hildenborough) (Desulfovibrio vulgaris)).